The primary structure comprises 325 residues: Elongation factor P--(R)-beta-lysine ligase (325 aa).

A substrate-binding site is contributed by 76 to 78; that stretch reads SPE. ATP-binding positions include 100–102 and N109; that span reads RNE. Y118 contributes to the substrate binding site. An ATP-binding site is contributed by 244 to 245; that stretch reads EL. E251 is a substrate binding site. Residue G300 participates in ATP binding.

This sequence belongs to the class-II aminoacyl-tRNA synthetase family. EpmA subfamily. In terms of assembly, homodimer.

The enzyme catalyses D-beta-lysine + L-lysyl-[protein] + ATP = N(6)-((3R)-3,6-diaminohexanoyl)-L-lysyl-[protein] + AMP + diphosphate + H(+). Functionally, with EpmB is involved in the beta-lysylation step of the post-translational modification of translation elongation factor P (EF-P). Catalyzes the ATP-dependent activation of (R)-beta-lysine produced by EpmB, forming a lysyl-adenylate, from which the beta-lysyl moiety is then transferred to the epsilon-amino group of a conserved specific lysine residue in EF-P. This Yersinia enterocolitica serotype O:8 / biotype 1B (strain NCTC 13174 / 8081) protein is Elongation factor P--(R)-beta-lysine ligase.